Consider the following 376-residue polypeptide: tRNA-specific 2-thiouridylase MnmA (376 aa).

Residues 14-21 (GMSGGVDS) and Met40 contribute to the ATP site. Residues 100–102 (NPD) are interaction with target base in tRNA. The Nucleophile role is filled by Cys105. Cys105 and Cys202 are oxidised to a cystine. An ATP-binding site is contributed by Gly129. Residues 152 to 154 (KDQ) are interaction with tRNA. Catalysis depends on Cys202, which acts as the Cysteine persulfide intermediate. The segment at 315–316 (RY) is interaction with tRNA.

This sequence belongs to the MnmA/TRMU family.

It is found in the cytoplasm. The enzyme catalyses S-sulfanyl-L-cysteinyl-[protein] + uridine(34) in tRNA + AH2 + ATP = 2-thiouridine(34) in tRNA + L-cysteinyl-[protein] + A + AMP + diphosphate + H(+). Its function is as follows. Catalyzes the 2-thiolation of uridine at the wobble position (U34) of tRNA, leading to the formation of s(2)U34. In Lactococcus lactis subsp. lactis (strain IL1403) (Streptococcus lactis), this protein is tRNA-specific 2-thiouridylase MnmA.